A 151-amino-acid chain; its full sequence is MRCPFCNSVDTSVKNSRPSDCKMSVRRRRSCDSCNSRFTTVEELLLKPVKVLKKDGSVEAFDRQKLLTSIILATKKRPVTRDQIDMVVSNMFYKLEAIKGSVVPSGVIGGMVMESLFALDKVSYIRFASVYMNFSDVNDFSGIVERVQEVV.

Residues 3–34 (CPFCNSVDTSVKNSRPSDCKMSVRRRRSCDSC) fold into a zinc finger. Residues 49 to 139 (VKVLKKDGSV…VYMNFSDVND (91 aa)) enclose the ATP-cone domain.

The protein belongs to the NrdR family. The cofactor is Zn(2+).

Its function is as follows. Negatively regulates transcription of bacterial ribonucleotide reductase nrd genes and operons by binding to NrdR-boxes. This is Transcriptional repressor NrdR from Anaplasma marginale (strain Florida).